Here is a 129-residue protein sequence, read N- to C-terminus: Ribosome-binding factor A (129 aa).

It belongs to the RbfA family. In terms of assembly, monomer. Binds 30S ribosomal subunits, but not 50S ribosomal subunits or 70S ribosomes.

It localises to the cytoplasm. One of several proteins that assist in the late maturation steps of the functional core of the 30S ribosomal subunit. Associates with free 30S ribosomal subunits (but not with 30S subunits that are part of 70S ribosomes or polysomes). Required for efficient processing of 16S rRNA. May interact with the 5'-terminal helix region of 16S rRNA. The protein is Ribosome-binding factor A of Thermomicrobium roseum (strain ATCC 27502 / DSM 5159 / P-2).